A 699-amino-acid chain; its full sequence is Probable xyloglucan glycosyltransferase 12 (699 aa).

2 helical membrane passes run 126–146 (CLKV…AAYF) and 194–214 (IVLF…CFWI). Asp280 is an active-site residue. Substrate-binding residues include Asp339 and Asp341. Asp433 is an active-site residue. 2 helical membrane-spanning segments follow: residues 511 to 531 (LILP…TMFV) and 536 to 556 (LPAW…ILPA). A disordered region spans residues 616–646 (EKTTKHQRGVSAPETEAEKKAEKTKRKKKKH). Residues Lys617 and Lys620 each participate in a glycyl lysine isopeptide (Lys-Gly) (interchain with G-Cter in ubiquitin) cross-link. Phosphoserine is present on Ser626. Basic residues predominate over residues 637–646 (EKTKRKKKKH). 2 consecutive transmembrane segments (helical) span residues 649 to 668 (IYMK…TRSL) and 674 to 694 (IHFY…LDLI).

The protein belongs to the glycosyltransferase 2 family. Plant cellulose synthase-like C subfamily. Homodimer. Mainly expressed in roots, flowers and seeds, and, at very low levels, in seedlings, leaves and stems.

It localises to the golgi apparatus membrane. Functionally, probable beta-1,4-glucan synthase rather involved in the synthesis of the xyloglucan backbone than cellulose. Seems to work simultaneously with xyloglucan 6-xylosyltransferase. Xyloglucan is a noncellulosic polysaccharides of plant cell wall and consists of a glucan backbone substituted by xylose, galactose and fucose. This chain is Probable xyloglucan glycosyltransferase 12, found in Arabidopsis thaliana (Mouse-ear cress).